We begin with the raw amino-acid sequence, 162 residues long: Cyclic pyranopterin monophosphate synthase (162 aa).

Residues Leu-75–His-77 and Met-113–Glu-114 contribute to the substrate site. Asp-128 is an active-site residue.

This sequence belongs to the MoaC family. In terms of assembly, homohexamer; trimer of dimers.

It carries out the reaction (8S)-3',8-cyclo-7,8-dihydroguanosine 5'-triphosphate = cyclic pyranopterin phosphate + diphosphate. Its pathway is cofactor biosynthesis; molybdopterin biosynthesis. Catalyzes the conversion of (8S)-3',8-cyclo-7,8-dihydroguanosine 5'-triphosphate to cyclic pyranopterin monophosphate (cPMP). In Burkholderia vietnamiensis (strain G4 / LMG 22486) (Burkholderia cepacia (strain R1808)), this protein is Cyclic pyranopterin monophosphate synthase.